Consider the following 229-residue polypeptide: Large ribosomal subunit protein uL1 (229 aa).

It belongs to the universal ribosomal protein uL1 family. As to quaternary structure, part of the 50S ribosomal subunit.

Binds directly to 23S rRNA. The L1 stalk is quite mobile in the ribosome, and is involved in E site tRNA release. Functionally, protein L1 is also a translational repressor protein, it controls the translation of the L11 operon by binding to its mRNA. The polypeptide is Large ribosomal subunit protein uL1 (Clostridium botulinum (strain 657 / Type Ba4)).